Here is a 384-residue protein sequence, read N- to C-terminus: Cysteine protease ATG4B (384 aa).

The active-site Nucleophile is the C74. Active-site residues include D269 and H271. An LIR motif is present at residues 379–382 (FEIL).

This sequence belongs to the peptidase C54 family.

It is found in the cytoplasm. Its subcellular location is the cytosol. The protein localises to the cytoplasmic vesicle. It localises to the autophagosome. The protein resides in the endoplasmic reticulum. It is found in the mitochondrion. The enzyme catalyses [protein]-C-terminal L-amino acid-glycyl-phosphatidylethanolamide + H2O = [protein]-C-terminal L-amino acid-glycine + a 1,2-diacyl-sn-glycero-3-phosphoethanolamine. The catalysed reaction is [protein]-C-terminal L-amino acid-glycyl-phosphatidylserine + H2O = [protein]-C-terminal L-amino acid-glycine + a 1,2-diacyl-sn-glycero-3-phospho-L-serine. Its function is as follows. Cysteine protease that plays a key role in autophagy by mediating both proteolytic activation and delipidation of ATG8 family proteins. Required for canonical autophagy (macroautophagy), non-canonical autophagy as well as for mitophagy. The protease activity is required for proteolytic activation of ATG8 family proteins: cleaves the C-terminal amino acid of ATG8 proteins to reveal a C-terminal glycine. Exposure of the glycine at the C-terminus is essential for ATG8 proteins conjugation to phosphatidylethanolamine (PE) and insertion to membranes, which is necessary for autophagy. Protease activity is also required to counteract formation of high-molecular weight conjugates of ATG8 proteins (ATG8ylation): acts as a deubiquitinating-like enzyme that removes ATG8 conjugated to other proteins, such as ATG3. In addition to the protease activity, also mediates delipidation of ATG8 family proteins. Catalyzes delipidation of PE-conjugated forms of ATG8 proteins during macroautophagy. Also involved in non-canonical autophagy, a parallel pathway involving conjugation of ATG8 proteins to single membranes at endolysosomal compartments, by catalyzing delipidation of ATG8 proteins conjugated to phosphatidylserine (PS). The chain is Cysteine protease ATG4B from Xenopus laevis (African clawed frog).